The chain runs to 855 residues: DNA mismatch repair protein MutS (855 aa).

616–623 (GPNMGGKS) is a binding site for ATP.

It belongs to the DNA mismatch repair MutS family.

In terms of biological role, this protein is involved in the repair of mismatches in DNA. It is possible that it carries out the mismatch recognition step. This protein has a weak ATPase activity. The sequence is that of DNA mismatch repair protein MutS from Salmonella dublin (strain CT_02021853).